Here is a 469-residue protein sequence, read N- to C-terminus: Cysteine--tRNA ligase (469 aa).

Residue Cys29 coordinates Zn(2+). Positions 31 to 41 (PTVYNYIHIGN) match the 'HIGH' region motif. The Zn(2+) site is built by Cys210, His235, and Glu239. The 'KMSKS' region signature appears at 267–271 (KMSKS). Lys270 lines the ATP pocket.

This sequence belongs to the class-I aminoacyl-tRNA synthetase family. As to quaternary structure, monomer. Zn(2+) serves as cofactor.

The protein resides in the cytoplasm. The enzyme catalyses tRNA(Cys) + L-cysteine + ATP = L-cysteinyl-tRNA(Cys) + AMP + diphosphate. This is Cysteine--tRNA ligase from Thermosipho africanus (strain TCF52B).